The following is a 34-amino-acid chain: Photosystem II reaction center protein Psb30 (34 aa).

The helical transmembrane segment at 6–26 (VVFQLMALFFVLAAGPAVVVL) threads the bilayer.

The protein belongs to the Psb30/Ycf12 family. As to quaternary structure, PSII is composed of 1 copy each of membrane proteins PsbA, PsbB, PsbC, PsbD, PsbE, PsbF, PsbH, PsbI, PsbJ, PsbK, PsbL, PsbM, PsbT, PsbX, PsbY, PsbZ, Psb30/Ycf12, peripheral proteins of the oxygen-evolving complex and a large number of cofactors. It forms dimeric complexes.

It is found in the plastid. It localises to the chloroplast thylakoid membrane. Its function is as follows. A core subunit of photosystem II (PSII), probably helps stabilize the reaction center. This is Photosystem II reaction center protein Psb30 from Stigeoclonium helveticum (Green alga).